Consider the following 430-residue polypeptide: tRNA(Ile)-lysidine synthase (430 aa).

Residue 24 to 29 participates in ATP binding; that stretch reads SGGLDS.

Belongs to the tRNA(Ile)-lysidine synthase family.

It is found in the cytoplasm. It carries out the reaction cytidine(34) in tRNA(Ile2) + L-lysine + ATP = lysidine(34) in tRNA(Ile2) + AMP + diphosphate + H(+). In terms of biological role, ligates lysine onto the cytidine present at position 34 of the AUA codon-specific tRNA(Ile) that contains the anticodon CAU, in an ATP-dependent manner. Cytidine is converted to lysidine, thus changing the amino acid specificity of the tRNA from methionine to isoleucine. This chain is tRNA(Ile)-lysidine synthase, found in Haemophilus influenzae (strain 86-028NP).